We begin with the raw amino-acid sequence, 406 residues long: Collagen and calcium-binding EGF domain-containing protein 1 (406 aa).

Residues 1-34 (MVPPPPSRGGAARGQLGRSLGPLLLLLALGHTWT) form the signal peptide. In terms of domain architecture, EGF-like; calcium-binding spans 134-175 (DIDECASSNGTLCAHICINTLGSYRCECREGYIREDDGKTCT). Intrachain disulfides connect C138/C150, C146/C159, and C161/C174. N142 carries an N-linked (GlcNAc...) asparagine glycan. N182 carries an N-linked (GlcNAc...) asparagine glycan. Disordered regions lie at residues 244–335 (YLPG…PGSF) and 360–406 (RTHS…DFYP). 2 Collagen-like domains span residues 245-290 (LPGP…PMGP) and 300-333 (GRRGPVGPPGAPGRDGSKGERGAPGPRGSPGPPG). The segment covering 270-279 (PGMPGPPGQP) has biased composition (pro residues). The span at 281 to 292 (PRGSMGPMGPSP) shows a compositional bias: low complexity. S385 carries O-linked (Xyl...) (chondroitin sulfate) serine glycosylation. The span at 386 to 406 (GDDHPRRTETRDLRAPRDFYP) shows a compositional bias: basic and acidic residues.

Belongs to the CCBE1 family. Detected in fibroblasts and urine (at protein level). Not expressed in blood or lymphatic endothelial cells.

Its subcellular location is the secreted. Its function is as follows. Required for lymphangioblast budding and angiogenic sprouting from venous endothelium during embryogenesis. The chain is Collagen and calcium-binding EGF domain-containing protein 1 (CCBE1) from Homo sapiens (Human).